The following is a 317-amino-acid chain: MTKKVVTITLNPALDLTGSVNQLNVGSVSLVGQSSLHAAGKGVNVAKVLSELGAQVTVTGFLGRDNQELFCQLFEQLGVQDAFIRIAGATRINVKLVEQSGAVSDINFPGIQVTEADIEAFEATLQRLAQDHDYFVLAGSLPQGISPQRCAGWIAQLRSMNKKVLFDSSRDALLAGLDAKPWLIKPNDEELSQWCGRELTTLTDCQQAAAELAQKQIENIVISMGAEGVMWLHENQWLHAKPPKMQVVSTVGAGDTLVAGLCWGHMQRMEKESLLRFATALSALAVTQVGVGLGDREQLNTLQQQIQVSALYPTMGA.

ATP contacts are provided by residues 223-228 (SMGAEG) and 254-255 (GD). The active-site Proton acceptor is Asp-255.

It belongs to the carbohydrate kinase PfkB family.

The enzyme catalyses beta-D-fructose 1-phosphate + ATP = beta-D-fructose 1,6-bisphosphate + ADP + H(+). Functionally, catalyzes the ATP-dependent phosphorylation of fructose-l-phosphate to fructose-l,6-bisphosphate. The protein is 1-phosphofructokinase of Vibrio cholerae serotype O1 (strain ATCC 39315 / El Tor Inaba N16961).